Consider the following 289-residue polypeptide: Epoxyqueuosine reductase (289 aa).

Aspartate 111 serves as the catalytic Proton donor. In terms of domain architecture, 4Fe-4S ferredoxin-type spans glutamine 156–valine 185. Positions 165, 168, 171, 175, 191, 219, 222, and 226 each coordinate [4Fe-4S] cluster.

This sequence belongs to the QueG family. In terms of assembly, monomer. Requires cob(II)alamin as cofactor. [4Fe-4S] cluster is required as a cofactor.

It is found in the cytoplasm. The enzyme catalyses epoxyqueuosine(34) in tRNA + AH2 = queuosine(34) in tRNA + A + H2O. Its pathway is tRNA modification; tRNA-queuosine biosynthesis. In terms of biological role, catalyzes the conversion of epoxyqueuosine (oQ) to queuosine (Q), which is a hypermodified base found in the wobble positions of tRNA(Asp), tRNA(Asn), tRNA(His) and tRNA(Tyr). This chain is Epoxyqueuosine reductase, found in Synechocystis sp. (strain ATCC 27184 / PCC 6803 / Kazusa).